We begin with the raw amino-acid sequence, 95 residues long: Aspartyl/glutamyl-tRNA(Asn/Gln) amidotransferase subunit C (95 aa).

Belongs to the GatC family. As to quaternary structure, heterotrimer of A, B and C subunits.

It carries out the reaction L-glutamyl-tRNA(Gln) + L-glutamine + ATP + H2O = L-glutaminyl-tRNA(Gln) + L-glutamate + ADP + phosphate + H(+). The catalysed reaction is L-aspartyl-tRNA(Asn) + L-glutamine + ATP + H2O = L-asparaginyl-tRNA(Asn) + L-glutamate + ADP + phosphate + 2 H(+). Allows the formation of correctly charged Asn-tRNA(Asn) or Gln-tRNA(Gln) through the transamidation of misacylated Asp-tRNA(Asn) or Glu-tRNA(Gln) in organisms which lack either or both of asparaginyl-tRNA or glutaminyl-tRNA synthetases. The reaction takes place in the presence of glutamine and ATP through an activated phospho-Asp-tRNA(Asn) or phospho-Glu-tRNA(Gln). This Anaeromyxobacter sp. (strain Fw109-5) protein is Aspartyl/glutamyl-tRNA(Asn/Gln) amidotransferase subunit C.